The following is a 702-amino-acid chain: MTSRNQLVQKVLQELQEAVECEGLEGLIGASLEAKQVLSSFTLPTCREGGPGLQVLEVDSVALSLYPEDAPRNMLPLVCKGEGSLLFEAASMLLWGDAGLSLELRARTVVEMLLHRHYYLQGMIDSKVMLQAVRYSLCSEESPEMTSLPPATLEAIFDADVKASCFPSSFSNVWHLYALASVLQRNIYSIYPMRNLKIRPYFNRVIRPRRCDHVPSTLHIMWAGQPLTSHFFRHQYFAPVVGLEEVEAEGAPGVAPALPALAPLSSPAKTLELLNREPGLSYSHLCERYSVTKSTFYRWRRQSQEHRQKVAARFSAKHFLQDSFHRGGVVPLQQFLQRFPEISRSTYYAWKHELLGSGTCPALPPREVLGMEELEKLPEEQVAEEELECSALAVSSPGMVLMQRAKLYLEHCISLNTLVPYRCFKRRFPGISRSTYYNWRRKALRRNPSFKPAPALSAAGTPQLASVGEGAVIPWKSEAEEGAGNATGEDPPAPGELLPLRMPLSRWQRRLRRAARRQVLSGHLPFCRFRLRYPSLSPSAFWVWKSLARGWPRGLSKLQVPVPTLGKGGQEAEEKQEKEAGRDVTAVMAPPVGASSEDVEGGPSREGALQEGATAQGQPHSGPLLSQPVVAAAGGRDGRMLVMDMIATTKFKAQAKLFLQKRFQSKSFPSYKEFSALFPLTARSTYYMWKRALYDGLTLVDG.

Residues 562–625 (VPTLGKGGQE…QGQPHSGPLL (64 aa)) are disordered. The span at 570 to 582 (QEAEEKQEKEAGR) shows a compositional bias: basic and acidic residues.

Belongs to the vertnin family.

It is found in the nucleus. In terms of biological role, acts as a transcription factor that regulates development of thoracic vertebrae. This Homo sapiens (Human) protein is Vertnin.